Here is a 90-residue protein sequence, read N- to C-terminus: DNA-binding protein HTa (90 aa).

It belongs to the bacterial histone-like protein family. In terms of assembly, homotetramer.

Functionally, histone-like DNA-binding protein which is capable of wrapping DNA to stabilize it, and thus to prevent its denaturation under extreme environmental conditions. This chain is DNA-binding protein HTa, found in Thermoplasma acidophilum (strain ATCC 25905 / DSM 1728 / JCM 9062 / NBRC 15155 / AMRC-C165).